Here is a 323-residue protein sequence, read N- to C-terminus: Olfactory receptor 2T35 (323 aa).

Topologically, residues 1 to 26 are extracellular; the sequence is MGMEGLLQNSTNFVLTGLITHPAFPG. Asparagine 9 carries an N-linked (GlcNAc...) asparagine glycan. The chain crosses the membrane as a helical span at residues 27-50; sequence LLFAVVFSIFVVAITANLVMILLI. Residues 51–58 lie on the Cytoplasmic side of the membrane; that stretch reads HMDSRLHT. The helical transmembrane segment at 59-80 threads the bilayer; that stretch reads PMYFLLSQLSIMDTIYICITVP. Residues 81-101 are Extracellular-facing; that stretch reads KMLQDLLSKDKTISFLGCAVQ. An intrachain disulfide couples cysteine 98 to cysteine 189. The chain crosses the membrane as a helical span at residues 102–120; sequence IFYLTLIGGEFFLLGLMAY. At 121 to 139 the chain is on the cytoplasmic side; it reads DRYVAVCNPLRYPLLMNRR. A helical transmembrane segment spans residues 140–158; it reads VCLFMVVGSWVGGSLDGFM. At 159–195 the chain is on the extracellular side; sequence LTPVTMSFPFCRSREINHFFCEIPAVLKLSCTDTSLY. Residues 196–219 traverse the membrane as a helical segment; it reads ETLMYACCVLMLLIPLSVISVSYT. At 220-236 the chain is on the cytoplasmic side; the sequence is HILLTVHRMNSAEGRRK. The chain crosses the membrane as a helical span at residues 237–259; the sequence is AFATCSSHIMVVSVFYGAAFYTN. Residues 260-272 lie on the Extracellular side of the membrane; the sequence is VLPHSYHTPEKDK. The helical transmembrane segment at 273-292 threads the bilayer; the sequence is VVSAFYTILTPMLNPLIYSL. Topologically, residues 293-323 are cytoplasmic; sequence RNKDVAAALRKVLGRCGSSQSIRVATVIRKG.

This sequence belongs to the G-protein coupled receptor 1 family.

The protein resides in the cell membrane. In terms of biological role, odorant receptor. The sequence is that of Olfactory receptor 2T35 (OR2T35) from Homo sapiens (Human).